We begin with the raw amino-acid sequence, 515 residues long: 2-isopropylmalate synthase (515 aa).

One can recognise a Pyruvate carboxyltransferase domain in the interval 5 to 268; it reads VIIFDTTLRD…VCGIDASQIV (264 aa). Mn(2+) contacts are provided by D14, H202, H204, and N239. The regulatory domain stretch occupies residues 394–515; it reads HFISLSQHSE…QAKLNAQMAP (122 aa).

It belongs to the alpha-IPM synthase/homocitrate synthase family. LeuA type 1 subfamily. In terms of assembly, homodimer. Mn(2+) serves as cofactor.

The protein localises to the cytoplasm. The enzyme catalyses 3-methyl-2-oxobutanoate + acetyl-CoA + H2O = (2S)-2-isopropylmalate + CoA + H(+). It participates in amino-acid biosynthesis; L-leucine biosynthesis; L-leucine from 3-methyl-2-oxobutanoate: step 1/4. Functionally, catalyzes the condensation of the acetyl group of acetyl-CoA with 3-methyl-2-oxobutanoate (2-ketoisovalerate) to form 3-carboxy-3-hydroxy-4-methylpentanoate (2-isopropylmalate). This chain is 2-isopropylmalate synthase, found in Polynucleobacter asymbioticus (strain DSM 18221 / CIP 109841 / QLW-P1DMWA-1) (Polynucleobacter necessarius subsp. asymbioticus).